A 205-amino-acid polypeptide reads, in one-letter code: SREBP regulating gene protein (205 aa).

At 1 to 16 the chain is on the cytoplasmic side; that stretch reads MLNLAALLWRRLLRKR. Residues 17–35 form a helical membrane-spanning segment; sequence WVLALVFGLSLVYFLSSTF. The Lumenal portion of the chain corresponds to 36–205; that stretch reads KQEERAVRDR…GESPPELFPA (170 aa). N-linked (GlcNAc...) asparagine glycosylation is present at Asn-67.

This sequence belongs to the SPRING family. Interacts with SCAP. In terms of tissue distribution, ubiquitously expressed with a slightly higher expression in the liver and kidney.

Its subcellular location is the golgi apparatus membrane. Positively regulates hepatic SREBP signaling pathway by modulating the proper localization of SCAP (SREBP cleavage-activating protein) to the endoplasmic reticulum, thereby controlling the level of functional SCAP. Plays a crucial role during embryogenesis. This Mus musculus (Mouse) protein is SREBP regulating gene protein (Spring1).